A 131-amino-acid chain; its full sequence is Small ribosomal subunit protein uS8 (131 aa).

The protein belongs to the universal ribosomal protein uS8 family. In terms of assembly, part of the 30S ribosomal subunit. Contacts proteins S5 and S12.

Its function is as follows. One of the primary rRNA binding proteins, it binds directly to 16S rRNA central domain where it helps coordinate assembly of the platform of the 30S subunit. The chain is Small ribosomal subunit protein uS8 from Campylobacter lari (strain RM2100 / D67 / ATCC BAA-1060).